A 137-amino-acid polypeptide reads, in one-letter code: Putative pre-16S rRNA nuclease (137 aa).

This sequence belongs to the YqgF nuclease family.

The protein localises to the cytoplasm. Functionally, could be a nuclease involved in processing of the 5'-end of pre-16S rRNA. This chain is Putative pre-16S rRNA nuclease, found in Anaeromyxobacter dehalogenans (strain 2CP-C).